A 140-amino-acid polypeptide reads, in one-letter code: Relaxin-3 (140 aa).

The first 23 residues, Met1–Ala23, serve as a signal peptide directing secretion. Disulfide bonds link Cys33/Cys127, Cys45/Cys140, and Cys126/Cys131. Positions Ala53–Arg116 are cleaved as a propeptide — connecting peptide.

This sequence belongs to the insulin family. Heterodimer of a B chain and an A chain linked by two disulfide bonds. As to expression, highly abundant expression is detected in neurons within the ventomedial dorsal tegmental nucleus and the laterally central gray alpha of the pons. Also detected at much lower levels within the hippocampus.

Its subcellular location is the secreted. Its function is as follows. May play a role in neuropeptide signaling processes. Ligand for LGR7, relaxin-3 receptor-1 and relaxin-3 receptor-2. The protein is Relaxin-3 (Rln3) of Rattus norvegicus (Rat).